The sequence spans 630 residues: ATP-dependent zinc metalloprotease FtsH 2 (630 aa).

Residues 1 to 8 are Cytoplasmic-facing; the sequence is MNNNPNRR. Residues 9-29 form a helical membrane-spanning segment; the sequence is GSLIGPLFIYFILAMLIFMSI. Residues 30–110 are Periplasmic-facing; that stretch reads SQLNTSNITE…YIQNTGASWW (81 aa). The helical transmembrane segment at 111–131 threads the bilayer; that stretch reads VTMLIYMLPLIILMFFWFWMF. The Cytoplasmic portion of the chain corresponds to 132–630; the sequence is RRSGTGEGIP…KETNLFVSYA (499 aa). 203–210 contacts ATP; that stretch reads GPPGTGKT. Position 425 (histidine 425) interacts with Zn(2+). The active site involves glutamate 426. Zn(2+) contacts are provided by histidine 429 and aspartate 502.

This sequence in the central section; belongs to the AAA ATPase family. The protein in the C-terminal section; belongs to the peptidase M41 family. In terms of assembly, homohexamer. Zn(2+) is required as a cofactor.

It localises to the cell inner membrane. Functionally, acts as a processive, ATP-dependent zinc metallopeptidase for both cytoplasmic and membrane proteins. Plays a role in the quality control of integral membrane proteins. This is ATP-dependent zinc metalloprotease FtsH 2 from Petrotoga mobilis (strain DSM 10674 / SJ95).